We begin with the raw amino-acid sequence, 114 residues long: DNA-binding protein rrnAC3180 (114 aa).

The segment covering 1 to 11 has biased composition (acidic residues); the sequence is MSGDPSEEELE. Residues 1-45 are disordered; sequence MSGDPSEEELEELRKKKMEQLKEQQGGEGEGQEAAQQQAEAQKQA. The segment covering 12-22 has biased composition (basic and acidic residues); sequence ELRKKKMEQLK. Positions 32–45 are enriched in low complexity; the sequence is QEAAQQQAEAQKQA.

This sequence belongs to the PDCD5 family.

The polypeptide is DNA-binding protein rrnAC3180 (Haloarcula marismortui (strain ATCC 43049 / DSM 3752 / JCM 8966 / VKM B-1809) (Halobacterium marismortui)).